The primary structure comprises 180 residues: Large ribosomal subunit protein uL5 (180 aa).

This sequence belongs to the universal ribosomal protein uL5 family. In terms of assembly, part of the 50S ribosomal subunit; part of the 5S rRNA/L5/L18/L25 subcomplex. Contacts the 5S rRNA and the P site tRNA. Forms a bridge to the 30S subunit in the 70S ribosome.

This is one of the proteins that bind and probably mediate the attachment of the 5S RNA into the large ribosomal subunit, where it forms part of the central protuberance. In the 70S ribosome it contacts protein S13 of the 30S subunit (bridge B1b), connecting the 2 subunits; this bridge is implicated in subunit movement. Contacts the P site tRNA; the 5S rRNA and some of its associated proteins might help stabilize positioning of ribosome-bound tRNAs. The polypeptide is Large ribosomal subunit protein uL5 (Streptococcus mutans serotype c (strain ATCC 700610 / UA159)).